Here is a 98-residue protein sequence, read N- to C-terminus: Large ribosomal subunit protein uL23 (98 aa).

This sequence belongs to the universal ribosomal protein uL23 family. Part of the 50S ribosomal subunit. Contacts protein L29, and trigger factor when it is bound to the ribosome.

One of the early assembly proteins it binds 23S rRNA. One of the proteins that surrounds the polypeptide exit tunnel on the outside of the ribosome. Forms the main docking site for trigger factor binding to the ribosome. The chain is Large ribosomal subunit protein uL23 from Alcanivorax borkumensis (strain ATCC 700651 / DSM 11573 / NCIMB 13689 / SK2).